Consider the following 252-residue polypeptide: 5-oxoprolinase subunit A (252 aa).

This sequence belongs to the LamB/PxpA family. Forms a complex composed of PxpA, PxpB and PxpC.

The catalysed reaction is 5-oxo-L-proline + ATP + 2 H2O = L-glutamate + ADP + phosphate + H(+). Functionally, catalyzes the cleavage of 5-oxoproline to form L-glutamate coupled to the hydrolysis of ATP to ADP and inorganic phosphate. The sequence is that of 5-oxoprolinase subunit A from Mycobacterium avium (strain 104).